The chain runs to 143 residues: Large ribosomal subunit protein uL11 (143 aa).

Belongs to the universal ribosomal protein uL11 family. As to quaternary structure, part of the ribosomal stalk of the 50S ribosomal subunit. Interacts with L10 and the large rRNA to form the base of the stalk. L10 forms an elongated spine to which L12 dimers bind in a sequential fashion forming a multimeric L10(L12)X complex. One or more lysine residues are methylated.

In terms of biological role, forms part of the ribosomal stalk which helps the ribosome interact with GTP-bound translation factors. This is Large ribosomal subunit protein uL11 from Borreliella burgdorferi (strain ATCC 35210 / DSM 4680 / CIP 102532 / B31) (Borrelia burgdorferi).